A 363-amino-acid polypeptide reads, in one-letter code: tRNA dimethylallyltransferase (363 aa).

Residue 65–72 (GPTASGKS) coordinates ATP. 67–72 (TASGKS) is a binding site for substrate. 2 interaction with substrate tRNA regions span residues 90 to 93 (DSMQ) and 214 to 218 (QRLIR).

The protein belongs to the IPP transferase family. In terms of assembly, monomer. Mg(2+) is required as a cofactor.

It catalyses the reaction adenosine(37) in tRNA + dimethylallyl diphosphate = N(6)-dimethylallyladenosine(37) in tRNA + diphosphate. In terms of biological role, catalyzes the transfer of a dimethylallyl group onto the adenine at position 37 in tRNAs that read codons beginning with uridine, leading to the formation of N6-(dimethylallyl)adenosine (i(6)A). This is tRNA dimethylallyltransferase from Rickettsia massiliae (strain Mtu5).